The primary structure comprises 71 residues: Small ribosomal subunit protein bS21 (71 aa).

The tract at residues 40–71 (KPTQERKRKAAAAVKRNIRRTSRDVTKRKRLY) is disordered. The span at 45–71 (RKRKAAAAVKRNIRRTSRDVTKRKRLY) shows a compositional bias: basic residues.

The protein belongs to the bacterial ribosomal protein bS21 family.

This Xylella fastidiosa (strain M23) protein is Small ribosomal subunit protein bS21.